The primary structure comprises 326 residues: Flap endonuclease 1 (326 aa).

The segment at 1–98 (MGVQFNDSIP…KTREERRKVK (98 aa)) is N-domain. Mg(2+) contacts are provided by Asp-27, Asp-80, Glu-152, Glu-154, Asp-173, Asp-175, and Asp-224. Residues 116–245 (DMQKYAKRIN…KKALTIIKNK (130 aa)) form an I-domain region. The interval 318–326 (SQTSLDSWF) is interaction with PCNA.

This sequence belongs to the XPG/RAD2 endonuclease family. FEN1 subfamily. As to quaternary structure, interacts with PCNA. PCNA stimulates the nuclease activity without altering cleavage specificity. Mg(2+) is required as a cofactor.

Functionally, structure-specific nuclease with 5'-flap endonuclease and 5'-3' exonuclease activities involved in DNA replication and repair. During DNA replication, cleaves the 5'-overhanging flap structure that is generated by displacement synthesis when DNA polymerase encounters the 5'-end of a downstream Okazaki fragment. Binds the unpaired 3'-DNA end and kinks the DNA to facilitate 5' cleavage specificity. Cleaves one nucleotide into the double-stranded DNA from the junction in flap DNA, leaving a nick for ligation. Also involved in the base excision repair (BER) pathway. Acts as a genome stabilization factor that prevents flaps from equilibrating into structures that lead to duplications and deletions. Also possesses 5'-3' exonuclease activity on nicked or gapped double-stranded DNA. The protein is Flap endonuclease 1 of Methanococcus aeolicus (strain ATCC BAA-1280 / DSM 17508 / OCM 812 / Nankai-3).